Consider the following 207-residue polypeptide: Ribosome maturation factor RimP (207 aa).

Residues 171 to 207 (RAPGGAPEEGEEDTTEAAPEGAGKSPKPGRRPARKTH) are disordered. Positions 197–207 (KPGRRPARKTH) are enriched in basic residues.

It belongs to the RimP family.

The protein resides in the cytoplasm. Functionally, required for maturation of 30S ribosomal subunits. In Gluconacetobacter diazotrophicus (strain ATCC 49037 / DSM 5601 / CCUG 37298 / CIP 103539 / LMG 7603 / PAl5), this protein is Ribosome maturation factor RimP.